The sequence spans 1230 residues: Cullin-associated NEDD8-dissociated protein 1 (1230 aa).

N-acetylalanine is present on alanine 2. 12 HEAT repeats span residues alanine 2–isoleucine 39, aspartate 44–glutamate 81, glutamine 83–proline 119, cysteine 131–glutamine 165, asparagine 171–asparagine 208, valine 210–histidine 247, arginine 248–phenylalanine 282, glutamate 289–glutamate 366, glutamate 370–proline 407, proline 424–glycine 467, glutamine 471–proline 510, and proline 515–proline 552. Lysine 55 bears the N6-acetyllysine mark. Residues aspartate 315–glycine 343 are disordered. At serine 335 the chain carries Phosphoserine. A Phosphoserine modification is found at serine 558. HEAT repeat units follow at residues proline 563–aspartate 602, serine 606–aspartate 643, proline 646–aspartate 683, alanine 688–serine 725, lysine 729–asparagine 768, leucine 770–arginine 808, alanine 809–valine 845, serine 852–proline 889, glutamate 890–proline 927, tyrosine 928–leucine 960, isoleucine 961–glutamine 998, proline 1002–serine 1039, aspartate 1043–leucine 1097, arginine 1099–leucine 1133, and glutamine 1140–alanine 1189. N6-acetyllysine is present on lysine 971.

The protein belongs to the CAND family. In terms of assembly, interacts with TBP. Part of a complex that contains CUL1 and RBX1. Interacts with unneddylated cullins: interacts with CUL1, CUL2, CUL3, CUL4A, CUL4B and CUL5. Does not bind neddylated CUL1. Interaction with cullins is abolished in presence of COMMD1, which antagonizes with CAND1 for interacting with cullins. Interacts with ERCC6. Interacts with DCUN1D1, DCUN1D2, DCUN1D3, DCUN1D4 and DCUN1D5; these interactions are bridged by cullins and strongly inhibits the neddylation of cullins.

The protein localises to the cytoplasm. The protein resides in the nucleus. Key assembly factor of SCF (SKP1-CUL1-F-box protein) E3 ubiquitin ligase complexes that promotes the exchange of the substrate-recognition F-box subunit in SCF complexes, thereby playing a key role in the cellular repertoire of SCF complexes. Acts as a F-box protein exchange factor. The exchange activity of CAND1 is coupled with cycles of neddylation conjugation: in the deneddylated state, cullin-binding CAND1 binds CUL1-RBX1, increasing dissociation of the SCF complex and promoting exchange of the F-box protein. Probably plays a similar role in other cullin-RING E3 ubiquitin ligase complexes. This chain is Cullin-associated NEDD8-dissociated protein 1 (CAND1), found in Pongo abelii (Sumatran orangutan).